A 101-amino-acid polypeptide reads, in one-letter code: MSQKIRIKLKSYDYSLVDKSAEKIVKTVKATGAIVSGPIPLPTHKRIFTVNRSTFVNKKSREQFELSSYKRLIDIYSSTAKTVDALMKLELPSGVEVEIKV.

Belongs to the universal ribosomal protein uS10 family. As to quaternary structure, part of the 30S ribosomal subunit.

In terms of biological role, involved in the binding of tRNA to the ribosomes. This is Small ribosomal subunit protein uS10 from Parabacteroides distasonis (strain ATCC 8503 / DSM 20701 / CIP 104284 / JCM 5825 / NCTC 11152).